Reading from the N-terminus, the 300-residue chain is Aspartate carbamoyltransferase catalytic subunit (300 aa).

Carbamoyl phosphate is bound by residues R54 and T55. K82 is a binding site for L-aspartate. Carbamoyl phosphate-binding residues include R104, H131, and Q134. Residues R164 and R213 each coordinate L-aspartate. A256 and P257 together coordinate carbamoyl phosphate.

It belongs to the aspartate/ornithine carbamoyltransferase superfamily. ATCase family. Heterododecamer (2C3:3R2) of six catalytic PyrB chains organized as two trimers (C3), and six regulatory PyrI chains organized as three dimers (R2).

The enzyme catalyses carbamoyl phosphate + L-aspartate = N-carbamoyl-L-aspartate + phosphate + H(+). The protein operates within pyrimidine metabolism; UMP biosynthesis via de novo pathway; (S)-dihydroorotate from bicarbonate: step 2/3. Its function is as follows. Catalyzes the condensation of carbamoyl phosphate and aspartate to form carbamoyl aspartate and inorganic phosphate, the committed step in the de novo pyrimidine nucleotide biosynthesis pathway. In Malacoplasma penetrans (strain HF-2) (Mycoplasma penetrans), this protein is Aspartate carbamoyltransferase catalytic subunit.